We begin with the raw amino-acid sequence, 339 residues long: Tetraacyldisaccharide 4'-kinase (339 aa).

62-69 contacts ATP; sequence VAGGTGKT.

It belongs to the LpxK family.

The catalysed reaction is a lipid A disaccharide + ATP = a lipid IVA + ADP + H(+). It participates in glycolipid biosynthesis; lipid IV(A) biosynthesis; lipid IV(A) from (3R)-3-hydroxytetradecanoyl-[acyl-carrier-protein] and UDP-N-acetyl-alpha-D-glucosamine: step 6/6. Functionally, transfers the gamma-phosphate of ATP to the 4'-position of a tetraacyldisaccharide 1-phosphate intermediate (termed DS-1-P) to form tetraacyldisaccharide 1,4'-bis-phosphate (lipid IVA). The chain is Tetraacyldisaccharide 4'-kinase from Xylella fastidiosa (strain 9a5c).